The following is a 101-amino-acid chain: 2-amino-4-ketopentanoate thiolase alpha subunit (101 aa).

The protein belongs to the OrtA family. As to quaternary structure, heterodimer with OrtB.

It carries out the reaction D-alanine + acetyl-CoA = (2R)-2-amino-4-oxopentanoate + CoA. Completely inhibited by p-chloromercuribenzoate (p-ClHgBzO) and acetyl-CoA, and partially inhibited by N-ethylmaleimide. Functionally, involved in the ornithine fermentation pathway. Catalyzes the thiolytic cleavage of 2-amino-4-ketopentanoate (AKP) with coenzyme A (CoA) to form acetyl-CoA and alanine. It is strictly specific for AKP. In Acetoanaerobium sticklandii (strain ATCC 12662 / DSM 519 / JCM 1433 / CCUG 9281 / NCIMB 10654 / HF) (Clostridium sticklandii), this protein is 2-amino-4-ketopentanoate thiolase alpha subunit.